Reading from the N-terminus, the 161-residue chain is Small ribosomal subunit protein uS19 (161 aa).

A compositionally biased stretch (basic residues) spans 1 to 19 (MARQKKYSGKGGARKKNKQ). The disordered stretch occupies residues 1 to 26 (MARQKKYSGKGGARKKNKQKQSVAPR).

The protein belongs to the universal ribosomal protein uS19 family.

In terms of biological role, protein S19 forms a complex with S13 that binds strongly to the 16S ribosomal RNA. This is Small ribosomal subunit protein uS19 from Methanococcus maripaludis (strain C7 / ATCC BAA-1331).